The sequence spans 466 residues: 3-isopropylmalate dehydratase large subunit (466 aa).

Residues Cys-346, Cys-406, and Cys-409 each coordinate [4Fe-4S] cluster.

The protein belongs to the aconitase/IPM isomerase family. LeuC type 1 subfamily. In terms of assembly, heterodimer of LeuC and LeuD. [4Fe-4S] cluster serves as cofactor.

The enzyme catalyses (2R,3S)-3-isopropylmalate = (2S)-2-isopropylmalate. It functions in the pathway amino-acid biosynthesis; L-leucine biosynthesis; L-leucine from 3-methyl-2-oxobutanoate: step 2/4. Catalyzes the isomerization between 2-isopropylmalate and 3-isopropylmalate, via the formation of 2-isopropylmaleate. The protein is 3-isopropylmalate dehydratase large subunit of Cytophaga hutchinsonii (strain ATCC 33406 / DSM 1761 / CIP 103989 / NBRC 15051 / NCIMB 9469 / D465).